The chain runs to 140 residues: uncharacterized protein (140 aa).

N-linked (GlcNAc...) asparagine glycosylation is present at Asn27. 3 consecutive transmembrane segments (helical) span residues 45 to 65 (FSLYWTLIFNGAFYVTAGVYA), 76 to 96 (VWIFVMYVLYGGVQGLTTGTV), and 116 to 136 (VPLCCAVVQILFDVVLSYSMV).

Belongs to the TMEM170 family.

The protein resides in the membrane. This is an uncharacterized protein from Saccharomyces cerevisiae (strain ATCC 204508 / S288c) (Baker's yeast).